The sequence spans 335 residues: Galactosylgalactosylxylosylprotein 3-beta-glucuronosyltransferase 3 (335 aa).

Over 1 to 7 (MKLKLKN) the chain is Cytoplasmic. The chain crosses the membrane as a helical; Signal-anchor for type II membrane protein span at residues 8 to 28 (VFLAYFLVSIAGLLYALVQLG). The Lumenal portion of the chain corresponds to 29-335 (QPCDCLPPLR…GQGSDPAIEV (307 aa)). A Mn(2+)-binding site is contributed by aspartate 196. The active-site Proton acceptor is the glutamate 281. An N-linked (GlcNAc...) asparagine glycan is attached at asparagine 300. Positions 312–322 (EKPKMKQEEQL) are enriched in basic and acidic residues. Residues 312–335 (EKPKMKQEEQLQRQGQGSDPAIEV) form a disordered region.

This sequence belongs to the glycosyltransferase 43 family. In terms of assembly, homodimer; disulfide-linked. Interacts with PXYLP1; the interaction increases the 2-phosphoxylose phosphatase activity of PXYLP1 during completion of linkage region formation in a B3GAT3-mediated manner. Mn(2+) serves as cofactor. In terms of processing, N-glycosylated. In terms of tissue distribution, liver, brain and heart. Moderate expression seen in lung, skeletal muscle, kidney and testis.

It is found in the golgi apparatus membrane. The protein localises to the golgi apparatus. Its subcellular location is the cis-Golgi network. The enzyme catalyses 3-O-(beta-D-galactosyl-(1-&gt;3)-beta-D-galactosyl-(1-&gt;4)-beta-D-xylosyl)-L-seryl-[protein] + UDP-alpha-D-glucuronate = 3-O-(beta-D-GlcA-(1-&gt;3)-beta-D-Gal-(1-&gt;3)-beta-D-Gal-(1-&gt;4)-beta-D-Xyl)-L-seryl-[protein] + UDP + H(+). It functions in the pathway protein modification; protein glycosylation. Glycosaminoglycans biosynthesis. Involved in forming the linkage tetrasaccharide present in heparan sulfate and chondroitin sulfate. Transfers a glucuronic acid moiety from the uridine diphosphate-glucuronic acid (UDP-GlcUA) to the common linkage region trisaccharide Gal-beta-1,3-Gal-beta-1,4-Xyl covalently bound to a Ser residue at the glycosaminylglycan attachment site of proteoglycans. Can also play a role in the biosynthesis of l2/HNK-1 carbohydrate epitope on glycoproteins. Highest activity seen with Gal-beta-1,3-Gal-beta-O-R (where R=naphthalenemethanol or benzyl alcohol). Stimulates 2-phosphoxylose phosphatase activity of PXYLP1 in presence of uridine diphosphate-glucuronic acid (UDP-GlcUA) during completion of linkage region formation. The polypeptide is Galactosylgalactosylxylosylprotein 3-beta-glucuronosyltransferase 3 (B3GAT3) (Cricetulus griseus (Chinese hamster)).